An 804-amino-acid polypeptide reads, in one-letter code: Leucine--tRNA ligase (804 aa).

The short motif at 40 to 51 (PYPSGAGLHVGH) is the 'HIGH' region element. Positions 576-580 (KMSKS) match the 'KMSKS' region motif. K579 contacts ATP.

This sequence belongs to the class-I aminoacyl-tRNA synthetase family.

Its subcellular location is the cytoplasm. It catalyses the reaction tRNA(Leu) + L-leucine + ATP = L-leucyl-tRNA(Leu) + AMP + diphosphate. The polypeptide is Leucine--tRNA ligase (Staphylococcus haemolyticus (strain JCSC1435)).